A 213-amino-acid polypeptide reads, in one-letter code: Protein Syd (213 aa).

The protein belongs to the Syd family.

The protein resides in the cell inner membrane. In terms of biological role, interacts with the SecY protein in vivo. May bind preferentially to an uncomplexed state of SecY, thus functioning either as a chelating agent for excess SecY in the cell or as a regulatory factor that negatively controls the translocase function. The chain is Protein Syd from Shewanella pealeana (strain ATCC 700345 / ANG-SQ1).